The sequence spans 314 residues: Aspartate carbamoyltransferase catalytic subunit (314 aa).

Residues Arg58 and Thr59 each contribute to the carbamoyl phosphate site. L-aspartate is bound at residue Lys86. The carbamoyl phosphate site is built by Arg108, His136, and Gln139. L-aspartate is bound by residues Arg169 and Arg223. Carbamoyl phosphate is bound by residues Gly264 and Pro265.

The protein belongs to the aspartate/ornithine carbamoyltransferase superfamily. ATCase family. In terms of assembly, heterododecamer (2C3:3R2) of six catalytic PyrB chains organized as two trimers (C3), and six regulatory PyrI chains organized as three dimers (R2).

The enzyme catalyses carbamoyl phosphate + L-aspartate = N-carbamoyl-L-aspartate + phosphate + H(+). The protein operates within pyrimidine metabolism; UMP biosynthesis via de novo pathway; (S)-dihydroorotate from bicarbonate: step 2/3. Catalyzes the condensation of carbamoyl phosphate and aspartate to form carbamoyl aspartate and inorganic phosphate, the committed step in the de novo pyrimidine nucleotide biosynthesis pathway. The sequence is that of Aspartate carbamoyltransferase catalytic subunit from Opitutus terrae (strain DSM 11246 / JCM 15787 / PB90-1).